Reading from the N-terminus, the 309-residue chain is Mitochondrial brown fat uncoupling protein 1 (309 aa).

The Mitochondrial intermembrane portion of the chain corresponds to 1–10 (MLRAPGSDAP). The chain crosses the membrane as a helical span at residues 11-32 (PTLSVRIAAAAGAACLADMITF). Solcar repeat units follow at residues 11 to 104 (PTLS…VREW), 113 to 203 (ASLG…MKEA), and 212 to 297 (DDLP…LKRE). Residues 33 to 75 (PLDTAKVRLQIQGEGQGQPPRAPRYRGVLGTVATLARTEGLQK) lie on the Mitochondrial matrix side of the membrane. Arg-58 is a fatty acid 16:0 binding site. The chain crosses the membrane as a helical span at residues 76-98 (LYSGLPAGLQRQVGFASLRIGLY). The Mitochondrial intermembrane segment spans residues 99–118 (DSVREWLSPGQGAAASLGSR). A helical transmembrane segment spans residues 119–135 (ISAGVMTGGAAVFIGQP). The Mitochondrial matrix segment spans residues 136–180 (TEVVKVRLQAQSHLHGRKPRYTGTYNAYRIIATTEGLTGLWKGTT). Residues 181 to 197 (PNLMRNVIINCTELVTY) traverse the membrane as a helical segment. Residues 198 to 214 (DLMKEALVKNHLLADDL) are Mitochondrial intermembrane-facing. The chain crosses the membrane as a helical span at residues 215-234 (PCHFLSALVAGFCTTVLSSP). Residues 235 to 268 (VDVVKTRFVNSVPEQYTSVPNCAMTMLTKEGPLA) lie on the Mitochondrial matrix side of the membrane. At Cys-256 the chain carries Cysteine sulfenic acid (-SOH). Residues 269-291 (FFKGFVPSFLRLGSWNVIMFVCF) form a helical membrane-spanning segment. Residue Lys-271 participates in fatty acid 16:0 binding. Residues 292-309 (EQLKRELMKSGRTVDCAT) lie on the Mitochondrial intermembrane side of the membrane.

It belongs to the mitochondrial carrier (TC 2.A.29) family. Most probably functions as a monomer. Binds one purine nucleotide per monomer. However, has also been suggested to function as a homodimer or a homotetramer. Tightly associates with cardiolipin in the mitochondrion inner membrane; may stabilize and regulate its activity. In terms of processing, may undergo sulfenylation upon cold exposure. May increase the sensitivity of UCP1 thermogenic function to the activation by noradrenaline probably through structural effects. Post-translationally, may undergo ubiquitin-mediated proteasomal degradation.

The protein localises to the mitochondrion inner membrane. It carries out the reaction H(+)(in) = H(+)(out). Its activity is regulated as follows. Has no constitutive proton transporter activity and has to be activated by long-chain fatty acids/LCFAs. Inhibited by purine nucleotides. Both purine nucleotides and LCFAs bind the cytosolic side of the transporter and directly compete to activate or inhibit it. Activated by noradrenaline and reactive oxygen species. Despite lacking canonical translational encoding for selenocysteine, a small pool of the protein has been observed to selectively incorporate selenocysteine at 'Cys-256'. Selenocysteine-modified protein is highly sensitive to redox modification and may constitute a pool of protein highly sensitive to activation by elevated levels of reactive oxygen species (ROS). Mitochondrial protein responsible for thermogenic respiration, a specialized capacity of brown adipose tissue and beige fat that participates in non-shivering adaptive thermogenesis to temperature and diet variations and more generally to the regulation of energy balance. Functions as a long-chain fatty acid/LCFA and proton symporter, simultaneously transporting one LCFA and one proton through the inner mitochondrial membrane. However, LCFAs remaining associated with the transporter via their hydrophobic tails, it results in an apparent transport of protons activated by LCFAs. Thereby, dissipates the mitochondrial proton gradient and converts the energy of substrate oxydation into heat instead of ATP. Regulates the production of reactive oxygen species/ROS by mitochondria. The polypeptide is Mitochondrial brown fat uncoupling protein 1 (Canis lupus familiaris (Dog)).